The primary structure comprises 415 residues: Gamma-glutamyl phosphate reductase (415 aa).

The protein belongs to the gamma-glutamyl phosphate reductase family.

The protein localises to the cytoplasm. It carries out the reaction L-glutamate 5-semialdehyde + phosphate + NADP(+) = L-glutamyl 5-phosphate + NADPH + H(+). It participates in amino-acid biosynthesis; L-proline biosynthesis; L-glutamate 5-semialdehyde from L-glutamate: step 2/2. In terms of biological role, catalyzes the NADPH-dependent reduction of L-glutamate 5-phosphate into L-glutamate 5-semialdehyde and phosphate. The product spontaneously undergoes cyclization to form 1-pyrroline-5-carboxylate. The chain is Gamma-glutamyl phosphate reductase from Bacillus subtilis (strain 168).